A 448-amino-acid chain; its full sequence is Binary larvicide subunit BinB (448 aa).

The interval 1–198 (MCDSKDNSGV…TAFVNSSFYA (198 aa)) is beta-trefoil domain. The cysteines at positions 67 and 161 are disulfide-linked. Residues 199-448 (AAIPQLPQTS…NEELIPKINQ (250 aa)) form a probable pore-forming domain region.

The protein belongs to the toxin_10 family. As to quaternary structure, forms a heterodimer with BinA. Upon toxin crystal solubilization with NaOH at pH 12, only the 63-kDa (binB) and 43-kDa (binA) proteins were detected. Interacts with mosquito protein Cpm1 which acts as its host receptor. In terms of processing, processed by proteases extracted from C.pipiens larval gut; unlike its partner BinA, it does not form a stable digestion product.

It is found in the spore. The protein localises to the perispore. Its function is as follows. Component of a binary toxin active against Culex and some Aedes mosquito larvae. This subunit alone has no toxic larvicidal activity. This subunit is responsible for localized binding to specific regions of the host larval gut. Binary toxin internalization into host gut cells requires both proteins. The chain is Binary larvicide subunit BinB (binB) from Lysinibacillus sphaericus (Bacillus sphaericus).